A 170-amino-acid chain; its full sequence is Thialysine N-epsilon-acetyltransferase (170 aa).

Positions Val-4–Glu-166 constitute an N-acetyltransferase domain. Position 27-28 (Tyr-27–Glu-28) interacts with substrate. At Lys-29 the chain carries N6-acetyllysine. Glu-92 is a binding site for substrate. Acetyl-CoA-binding positions include Ile-94–Val-96, Gly-102–Ser-107, Asn-133–Lys-135, and Tyr-140. Tyr-140 functions as the Proton donor in the catalytic mechanism. A substrate-binding site is contributed by Glu-152.

The protein belongs to the acetyltransferase family. As to quaternary structure, homodimer.

Its subcellular location is the cytoplasm. It catalyses the reaction S-(2-aminoethyl)-L-cysteine + acetyl-CoA = S-(2-acetamidoethyl)-L-cysteine + CoA + H(+). It carries out the reaction an alkane-alpha,omega-diamine + acetyl-CoA = an N-acetylalkane-alpha,omega-diamine + CoA + H(+). In terms of biological role, catalyzes the N-acetylation of the amino acid thialysine (S-(2-aminoethyl)-L-cysteine), a L-lysine analog with the 4-methylene group substituted with a sulfur. May also catalyze acetylation of polyamines, such as norspermidine, spermidine or spermine. However, ability to acetylate polyamines is weak, suggesting that it does not act as a diamine acetyltransferase in vivo. This Sus scrofa (Pig) protein is Thialysine N-epsilon-acetyltransferase.